A 379-amino-acid chain; its full sequence is L-lactate dehydrogenase (379 aa).

In terms of domain architecture, FMN hydroxy acid dehydrogenase spans 1–379 (MIISASTDYR…IGRDSLVSLP (379 aa)). Residue Y24 participates in substrate binding. S106 and Q127 together coordinate FMN. Residue Y129 coordinates substrate. T155 contributes to the FMN binding site. Residue R164 coordinates substrate. Position 251 (K251) interacts with FMN. H275 serves as the catalytic Proton acceptor. R278 serves as a coordination point for substrate. 306-330 (DSGIRTGLDVVRMLALGADTVLLGR) contributes to the FMN binding site.

It belongs to the FMN-dependent alpha-hydroxy acid dehydrogenase family. The cofactor is FMN.

The protein localises to the cell inner membrane. The enzyme catalyses (S)-lactate + A = pyruvate + AH2. Functionally, catalyzes the conversion of L-lactate to pyruvate. Is coupled to the respiratory chain. The chain is L-lactate dehydrogenase from Stenotrophomonas maltophilia (strain K279a).